A 316-amino-acid polypeptide reads, in one-letter code: Pantothenate kinase (316 aa).

Glycine 95 to serine 102 provides a ligand contact to ATP.

Belongs to the prokaryotic pantothenate kinase family.

It is found in the cytoplasm. It catalyses the reaction (R)-pantothenate + ATP = (R)-4'-phosphopantothenate + ADP + H(+). It functions in the pathway cofactor biosynthesis; coenzyme A biosynthesis; CoA from (R)-pantothenate: step 1/5. This is Pantothenate kinase from Escherichia coli O17:K52:H18 (strain UMN026 / ExPEC).